We begin with the raw amino-acid sequence, 304 residues long: Acetyl-coenzyme A carboxylase carboxyl transferase subunit beta (304 aa).

Residues 23 to 292 (VWTKCDSCGQ…PNPEAPREGV (270 aa)) enclose the CoA carboxyltransferase N-terminal domain. Zn(2+) is bound by residues Cys-27, Cys-30, Cys-46, and Cys-49. The C4-type zinc-finger motif lies at 27–49 (CDSCGQVLYRAELERNLEVCPKC). Positions 285 to 304 (PEAPREGVVVPPVPDQEPEA) are disordered. Positions 295-304 (PPVPDQEPEA) are enriched in pro residues.

It belongs to the AccD/PCCB family. As to quaternary structure, acetyl-CoA carboxylase is a heterohexamer composed of biotin carboxyl carrier protein (AccB), biotin carboxylase (AccC) and two subunits each of ACCase subunit alpha (AccA) and ACCase subunit beta (AccD). It depends on Zn(2+) as a cofactor.

It localises to the cytoplasm. The enzyme catalyses N(6)-carboxybiotinyl-L-lysyl-[protein] + acetyl-CoA = N(6)-biotinyl-L-lysyl-[protein] + malonyl-CoA. It functions in the pathway lipid metabolism; malonyl-CoA biosynthesis; malonyl-CoA from acetyl-CoA: step 1/1. Functionally, component of the acetyl coenzyme A carboxylase (ACC) complex. Biotin carboxylase (BC) catalyzes the carboxylation of biotin on its carrier protein (BCCP) and then the CO(2) group is transferred by the transcarboxylase to acetyl-CoA to form malonyl-CoA. The sequence is that of Acetyl-coenzyme A carboxylase carboxyl transferase subunit beta from Shigella sonnei (strain Ss046).